The sequence spans 126 residues: Prefoldin subunit beta (126 aa).

It belongs to the prefoldin subunit beta family. Heterohexamer of two alpha and four beta subunits.

It is found in the cytoplasm. Functionally, molecular chaperone capable of stabilizing a range of proteins. Seems to fulfill an ATP-independent, HSP70-like function in archaeal de novo protein folding. In Pyrobaculum neutrophilum (strain DSM 2338 / JCM 9278 / NBRC 100436 / V24Sta) (Thermoproteus neutrophilus), this protein is Prefoldin subunit beta.